We begin with the raw amino-acid sequence, 130 residues long: Small ribosomal subunit protein uS9 (130 aa).

This sequence belongs to the universal ribosomal protein uS9 family.

The sequence is that of Small ribosomal subunit protein uS9 from Ralstonia nicotianae (strain ATCC BAA-1114 / GMI1000) (Ralstonia solanacearum).